A 366-amino-acid chain; its full sequence is Ribosomal RNA large subunit methyltransferase M (366 aa).

Residues serine 188, 221-224, aspartate 240, aspartate 260, and aspartate 277 contribute to the S-adenosyl-L-methionine site; that span reads CPGG. The Proton acceptor role is filled by lysine 306.

The protein belongs to the class I-like SAM-binding methyltransferase superfamily. RNA methyltransferase RlmE family. RlmM subfamily. Monomer.

The protein resides in the cytoplasm. It carries out the reaction cytidine(2498) in 23S rRNA + S-adenosyl-L-methionine = 2'-O-methylcytidine(2498) in 23S rRNA + S-adenosyl-L-homocysteine + H(+). Its function is as follows. Catalyzes the 2'-O-methylation at nucleotide C2498 in 23S rRNA. The protein is Ribosomal RNA large subunit methyltransferase M of Shigella sonnei (strain Ss046).